Here is a 170-residue protein sequence, read N- to C-terminus: Protein FAM209 (170 aa).

An N-terminal signal peptide occupies residues 1–20 (MRTLLRWCLFLSLCVSCACA). The chain crosses the membrane as a helical span at residues 56-76 (WLGNKWLWLFVAIMIYVMLKF). Residues 83–107 (KEQHPPGLRGCQLRSPPKKAQNISP) are disordered.

In terms of assembly, interacts with DPY19L2. Interacts with CYLC1; the interaction may be relevant for proper acrosome attachment to the nuclear envelope. In terms of tissue distribution, predominately expressed in testis.

It localises to the nucleus inner membrane. Its function is as follows. Required for sperm acrosome biogenesis. The protein is Protein FAM209 of Mus musculus (Mouse).